The primary structure comprises 295 residues: Bifunctional protein FolD (295 aa).

NADP(+) is bound by residues 166-168 (GRS), Ser191, and Ile232.

It belongs to the tetrahydrofolate dehydrogenase/cyclohydrolase family. As to quaternary structure, homodimer.

The catalysed reaction is (6R)-5,10-methylene-5,6,7,8-tetrahydrofolate + NADP(+) = (6R)-5,10-methenyltetrahydrofolate + NADPH. The enzyme catalyses (6R)-5,10-methenyltetrahydrofolate + H2O = (6R)-10-formyltetrahydrofolate + H(+). Its pathway is one-carbon metabolism; tetrahydrofolate interconversion. In terms of biological role, catalyzes the oxidation of 5,10-methylenetetrahydrofolate to 5,10-methenyltetrahydrofolate and then the hydrolysis of 5,10-methenyltetrahydrofolate to 10-formyltetrahydrofolate. This is Bifunctional protein FolD from Wolbachia sp. subsp. Brugia malayi (strain TRS).